The chain runs to 418 residues: Calreticulin (418 aa).

The signal sequence occupies residues 1–17 (MLLPVPLLLGLLGLAAA). Residues 18 to 197 (EPVVYFKEQF…NSQVESGSLE (180 aa)) form an N-domain region. Gln26 is a Ca(2+) binding site. Lys48 carries the N6-acetyllysine modification. 2 residues coordinate Ca(2+): Lys62 and Lys64. At Lys64 the chain carries N6-(2-hydroxyisobutyryl)lysine. A disulfide bridge connects residues Cys105 and Cys137. An alpha-D-glucoside-binding residues include Tyr109, Lys111, Tyr128, and Asp135. Residue Lys159 is modified to N6-acetyllysine. The stretch at 191-202 (VESGSLEDDWDF) is one 1-1 repeat. Residues 191 to 255 (VESGSLEDDW…DAKKPEDWDE (65 aa)) form a 4 X approximate repeats region. A disordered region spans residues 193–277 (SGSLEDDWDF…NPEYKGEWKP (85 aa)). Residues 198–308 (DDWDFLPPKK…YSPDANIYAY (111 aa)) are P-domain. Residues 207 to 251 (KIKDPDASKPEDWDERAKIDDPTDSKPEDWDKPEHIPDPDAKKPE) are compositionally biased toward basic and acidic residues. Lys209 carries the post-translational modification N6-acetyllysine. 6 tandem repeats follow at residues 210 to 221 (DPDASKPEDWDE), 227 to 238 (DPTDSKPEDWDK), 244 to 255 (DPDAKKPEDWDE), 259 to 269 (GEWEPPVIQNP), 273 to 283 (GEWKPRQIDNP), and 287 to 297 (GTWIHPEIDNP). The segment at 237-270 (DKPEHIPDPDAKKPEDWDEEMDGEWEPPVIQNPE) is interaction with PPIB. Residues 252–261 (DWDEEMDGEW) are compositionally biased toward acidic residues. A 3 X approximate repeats region spans residues 259-297 (GEWEPPVIQNPEYKGEWKPRQIDNPDYKGTWIHPEIDNP). The tract at residues 309 to 418 (DSFAVLGLDL…AAAGQAKDEL (110 aa)) is C-domain. Asp317 serves as a coordination point for an alpha-D-glucoside. Asp328 contributes to the Ca(2+) binding site. Residues 349–418 (VTKTAEKQMK…AAAGQAKDEL (70 aa)) are disordered. Positions 352 to 379 (TAEKQMKDKQDEEQRLKEEEEEKKRKEE) are enriched in basic and acidic residues. Positions 380–409 (EEAEEDEEDKDDKEDEDEDEEDKDEEEEEA) are enriched in acidic residues. The short motif at 415–418 (KDEL) is the Prevents secretion from ER element.

This sequence belongs to the calreticulin family. In terms of assembly, monomer. Component of an EIF2 complex at least composed of CELF1/CUGBP1, CALR, CALR3, EIF2S1, EIF2S2, HSP90B1 and HSPA5. Interacts with PDIA3/ERp57 and SPACA9. Interacts with TRIM21. Interacts with NR3C1. Interacts with PPIB. Interacts (via P-domain) with PDIA5. Interacts with CLCC1.

It is found in the endoplasmic reticulum lumen. Its subcellular location is the cytoplasm. The protein localises to the cytosol. It localises to the secreted. The protein resides in the extracellular space. It is found in the extracellular matrix. Its subcellular location is the cell surface. The protein localises to the sarcoplasmic reticulum lumen. It localises to the cytoplasmic vesicle. The protein resides in the secretory vesicle. It is found in the cortical granule. Its subcellular location is the cytolytic granule. In terms of biological role, calcium-binding chaperone that promotes folding, oligomeric assembly and quality control in the endoplasmic reticulum (ER) via the calreticulin/calnexin cycle. This lectin interacts transiently with almost all of the monoglucosylated glycoproteins that are synthesized in the ER. Interacts with the DNA-binding domain of NR3C1 and mediates its nuclear export. Involved in maternal gene expression regulation. May participate in oocyte maturation via the regulation of calcium homeostasis. Present in the cortical granules of non-activated oocytes, is exocytosed during the cortical reaction in response to oocyte activation and might participate in the block to polyspermy. The chain is Calreticulin (CALR) from Oryctolagus cuniculus (Rabbit).